The primary structure comprises 267 residues: Phosphate import ATP-binding protein PstB (267 aa).

The 242-residue stretch at 21 to 262 folds into the ABC transporter domain; the sequence is VAARNLDFYY…PSKQQTEDYI (242 aa). 53–60 lines the ATP pocket; the sequence is GPSGCGKS.

This sequence belongs to the ABC transporter superfamily. Phosphate importer (TC 3.A.1.7) family. In terms of assembly, the complex is composed of two ATP-binding proteins (PstB), two transmembrane proteins (PstC and PstA) and a solute-binding protein (PstS).

It is found in the cell inner membrane. The catalysed reaction is phosphate(out) + ATP + H2O = ADP + 2 phosphate(in) + H(+). Functionally, part of the ABC transporter complex PstSACB involved in phosphate import. Responsible for energy coupling to the transport system. The protein is Phosphate import ATP-binding protein PstB of Xanthomonas campestris pv. campestris (strain 8004).